A 412-amino-acid polypeptide reads, in one-letter code: uncharacterized protein (412 aa).

Disordered regions lie at residues 150–171 (NTPG…QLGD), 177–196 (QITS…QQQQ), and 302–412 (QAQQ…PLNP). Residues 156-168 (QAQQQQQQQQQQQ) show a composition bias toward low complexity. Composition is skewed to polar residues over residues 177–187 (QITSSNNSGNS) and 310–321 (MGSSPTHSSPTI). Positions 335–345 (GGIINTNTNLN) are enriched in low complexity. The span at 350 to 363 (VSPNQPMPNSSPIL) shows a compositional bias: polar residues. 2 stretches are compositionally biased toward low complexity: residues 364–373 (PTNASSVVPP) and 381–394 (TSNN…TTSP).

This is an uncharacterized protein from Dictyostelium discoideum (Social amoeba).